Here is a 449-residue protein sequence, read N- to C-terminus: MKKITKFKDQKILVLGLARSGMAAALVLNELGAIVTVNDGKPFEENKEAQVLLEEGIKVITGSHPIDLLDEDFALMVKNPGIRYDNPMVERAEALKIPVITEVELAYLVSEAPIIGITGTNGKTTTTTLIADILNADGQSAKLSGNIGFPASEVAQKAQATDTLVMELSSFQLMGIDTFRPKIALITNLFSAHLDYHGSQEAYEAAKWRIQENMTADDFLILNFNQEKCRKLADKTKATVLAFSTKEKVSGAYVNEGKIYFKDEFIMEASELSLPGDHNLENALAAIVASKLRGAENEAIIEVLTSFAGVKHRLQYLGEIDGRKVYNDSKATNILATQKALSGFDNSKLWLLAGGLDRGNGFEDLEKDLEDLKGMVVFGQTADKLRLMAEKLNIPVFASQNVATALKEIMPQTQVGDTILLSPACASWDQYKTFEERGDLFIEAFESLK.

119–125 (GTNGKTT) contacts ATP.

The protein belongs to the MurCDEF family.

The protein localises to the cytoplasm. The catalysed reaction is UDP-N-acetyl-alpha-D-muramoyl-L-alanine + D-glutamate + ATP = UDP-N-acetyl-alpha-D-muramoyl-L-alanyl-D-glutamate + ADP + phosphate + H(+). The protein operates within cell wall biogenesis; peptidoglycan biosynthesis. Functionally, cell wall formation. Catalyzes the addition of glutamate to the nucleotide precursor UDP-N-acetylmuramoyl-L-alanine (UMA). In Lactococcus lactis subsp. cremoris (strain SK11), this protein is UDP-N-acetylmuramoylalanine--D-glutamate ligase.